Reading from the N-terminus, the 259-residue chain is NADPH-dependent reductase BacG (259 aa).

NADP(+) contacts are provided by residues 12-15 (SQGI), 34-36 (SRN), 62-63 (DM), isoleucine 90, lysine 113, and 185-191 (GFIATDR).

This sequence belongs to the short-chain dehydrogenases/reductases (SDR) family. In terms of assembly, homodimer.

Its subcellular location is the cytoplasm. It participates in antibiotic biosynthesis; bacilysin biosynthesis. In terms of biological role, along with the bacABCDEF operon, BacG is involved in the biosynthesis of the nonribosomally synthesized dipeptide antibiotic bacilysin, composed of L-alanine and L-anticapsin. Bacilysin is an irreversible inactivator of the glutaminase domain of glucosamine synthetase. BacG catalyzes the stereoselective reduction of exocyclic-delta(3),delta(5)-dihydro-hydroxyphenylpyruvate (ex-H2HPP), adding a pro-S hydride equivalent to C4 position to yield tetrahydro-hydroxyphenylpyruvate (H4HPP). Although the 3Z,7R-ex-H2HPP isomer is kinetically disfavored by BacB and produced in a smaller quantity than 3E,7R-ex-H2HPP, it is the preferred substrate for the conjugate reduction reaction of BacG. This chain is NADPH-dependent reductase BacG, found in Bacillus subtilis (strain 168).